The sequence spans 515 residues: Fatty acyl-CoA reductase 1 (515 aa).

The Cytoplasmic segment spans residues 1–465 (MVSIPEYYEG…ARKHLNKLRN (465 aa)). Residues 451–507 (SGLPAARKHLNKLRNIRYGFNTILVILIWRIFIARSQMARNIWYFVVSLCYKFLSYF) form a necessary and sufficient for PEX19-mediated localization into peroxisome membrane region. Residues 466–483 (IRYGFNTILVILIWRIFI) traverse the membrane as a helical segment. Topologically, residues 484–515 (ARSQMARNIWYFVVSLCYKFLSYFRASSTMRY) are peroxisomal.

The protein belongs to the fatty acyl-CoA reductase family. Interacts with PEX19; PEX19 mediates the targeting of FAR1 to peroxisomes.

Its subcellular location is the peroxisome membrane. The enzyme catalyses a long-chain fatty acyl-CoA + 2 NADPH + 2 H(+) = a long-chain primary fatty alcohol + 2 NADP(+) + CoA. It carries out the reaction hexadecanoyl-CoA + 2 NADPH + 2 H(+) = hexadecan-1-ol + 2 NADP(+) + CoA. The catalysed reaction is octadecanoyl-CoA + 2 NADPH + 2 H(+) = octadecan-1-ol + 2 NADP(+) + CoA. It catalyses the reaction eicosanoyl-CoA + 2 NADPH + 2 H(+) = eicosan-1-ol + 2 NADP(+) + CoA. The enzyme catalyses (9Z)-octadecenoyl-CoA + 2 NADPH + 2 H(+) = (9Z)-octadecen-1-ol + 2 NADP(+) + CoA. It carries out the reaction (9Z,12Z)-octadecadienoyl-CoA + 2 NADPH + 2 H(+) = (9Z,12Z)-octadecadien-1-ol + 2 NADP(+) + CoA. The catalysed reaction is 16-methylheptadecanoyl-CoA + 2 NADPH + 2 H(+) = 16-methylheptadecan-1-ol + 2 NADP(+) + CoA. It catalyses the reaction 18-methylnonadecanoyl-CoA + 2 NADPH + 2 H(+) = 18-methylnonadecan-1-ol + 2 NADP(+) + CoA. In terms of biological role, catalyzes the reduction of saturated and unsaturated C16 or C18 fatty acyl-CoA to fatty alcohols. It plays an essential role in the production of ether lipids/plasmalogens which synthesis requires fatty alcohols. In parallel, it is also required for wax monoesters production since fatty alcohols also constitute a substrate for their synthesis. The sequence is that of Fatty acyl-CoA reductase 1 from Homo sapiens (Human).